A 475-amino-acid chain; its full sequence is Ribulose bisphosphate carboxylase large chain (475 aa).

A propeptide spanning residues 1–2 (MS) is cleaved from the precursor. An N-acetylproline modification is found at proline 3. Lysine 14 is subject to N6,N6,N6-trimethyllysine. Substrate is bound by residues asparagine 123 and threonine 173. The Proton acceptor role is filled by lysine 175. Lysine 177 provides a ligand contact to substrate. Mg(2+) contacts are provided by lysine 201, aspartate 203, and glutamate 204. Lysine 201 bears the N6-carboxylysine mark. Histidine 294 (proton acceptor) is an active-site residue. The substrate site is built by arginine 295, histidine 327, and serine 379.

This sequence belongs to the RuBisCO large chain family. Type I subfamily. In terms of assembly, heterohexadecamer of 8 large chains and 8 small chains; disulfide-linked. The disulfide link is formed within the large subunit homodimers. Requires Mg(2+) as cofactor. In terms of processing, the disulfide bond which can form in the large chain dimeric partners within the hexadecamer appears to be associated with oxidative stress and protein turnover.

It is found in the plastid. Its subcellular location is the chloroplast. The catalysed reaction is 2 (2R)-3-phosphoglycerate + 2 H(+) = D-ribulose 1,5-bisphosphate + CO2 + H2O. It catalyses the reaction D-ribulose 1,5-bisphosphate + O2 = 2-phosphoglycolate + (2R)-3-phosphoglycerate + 2 H(+). Its function is as follows. RuBisCO catalyzes two reactions: the carboxylation of D-ribulose 1,5-bisphosphate, the primary event in carbon dioxide fixation, as well as the oxidative fragmentation of the pentose substrate in the photorespiration process. Both reactions occur simultaneously and in competition at the same active site. The chain is Ribulose bisphosphate carboxylase large chain from Platanus occidentalis (Sycamore).